Reading from the N-terminus, the 575-residue chain is Reverse gyrse subunit B (575 aa).

Residues 1-39 (MKIYYNNVCPNCSGRISNERLIKGLPCENDYPYEEGTIE) form an RG N-terminal-type; degenerate zinc finger. Residues Q83 and 100–107 (APTGMGKT) contribute to the ATP site. In terms of domain architecture, Helicase ATP-binding spans 87 to 247 (FIRAYKGYSF…KLKISGKDLE (161 aa)). Residues 204–207 (DDVD) carry the DEAD box motif. The region spanning 316–465 (QTLELIKKLG…ALKMVEEAIE (150 aa)) is the Helicase C-terminal domain.

Belongs to the DEAD box helicase family. DDVD subfamily. Heterodimer of an RgyA and RgyB subunit.

It is found in the cytoplasm. The catalysed reaction is ATP + H2O = ADP + phosphate + H(+). Its function is as follows. Modifies the topological state of DNA by introducing positive supercoils in an ATP-dependent process. Binds to single-stranded DNA, transiently cleaves and then rejoins the end, introducing a positive supercoil in the process. The scissile phosphodiester is attacked by the catalytic tyrosine of the enzyme, resulting in the formation of a DNA-(5'-phosphotyrosyl)-enzyme intermediate. Probably involved in rewinding DNA strands in regions of the chromosome that have opened up to allow replication, transcription, DNA repair or for DNA protection. Reconstituted holoenzyme binds dsDNA a bit better than ssDNA, this subunit preferentially binds dsDNA. In isolation this subunit has DNA-stimulated ATPase activity that is stimulated by topoisomerase-domain containing RgyA. This subunit inhibits the relaxation activity of the topoisomerase subunit while promoting positive supercoiling. The protein is Reverse gyrse subunit B of Nanoarchaeum equitans (strain Kin4-M).